The primary structure comprises 494 residues: Guanosine-5'-triphosphate,3'-diphosphate pyrophosphatase (494 aa).

Belongs to the GppA/Ppx family. GppA subfamily.

The enzyme catalyses guanosine 3'-diphosphate 5'-triphosphate + H2O = guanosine 3',5'-bis(diphosphate) + phosphate + H(+). The protein operates within purine metabolism; ppGpp biosynthesis; ppGpp from GTP: step 2/2. Functionally, catalyzes the conversion of pppGpp to ppGpp. Guanosine pentaphosphate (pppGpp) is a cytoplasmic signaling molecule which together with ppGpp controls the 'stringent response', an adaptive process that allows bacteria to respond to amino acid starvation, resulting in the coordinated regulation of numerous cellular activities. This Escherichia coli O127:H6 (strain E2348/69 / EPEC) protein is Guanosine-5'-triphosphate,3'-diphosphate pyrophosphatase.